The chain runs to 341 residues: Krueppel-like factor 17 (341 aa).

A disordered region spans residues 214–252 (VTESNTQEEPFVREPPTPAPEGAESPSTSRGATRRQSPV). Polar residues predominate over residues 238–252 (SPSTSRGATRRQSPV). 3 consecutive C2H2-type zinc fingers follow at residues 256–280 (YVCT…QRKH), 286–310 (FACD…KRIH), and 316–338 (HKCD…KRTH).

It belongs to the Sp1 C2H2-type zinc-finger protein family. In terms of tissue distribution, exclusively expressed in testis and ovary. Localized to step 3-8 spermatids in testis and growing oocytes in ovary.

It is found in the nucleus. In terms of biological role, transcription repressor that binds to the promoter of target genes and prevents their expression. Acts as a negative regulator of epithelial-mesenchymal transition and metastasis in breast cancer. Specifically binds the 5'-CACCC-3' sequence in the promoter of ID1, a key metastasis regulator in breast cancer, and repress its expression. May be a germ cell-specific transcription factor that plays important roles in spermatid differentiation and oocyte development. This is Krueppel-like factor 17 (Klf17) from Mus musculus (Mouse).